The primary structure comprises 275 residues: Shikimate dehydrogenase (NADP(+)) (275 aa).

Shikimate is bound by residues 17-19 and threonine 64; that span reads SKS. Residue lysine 68 is the Proton acceptor of the active site. Glutamate 80 contacts NADP(+). 2 residues coordinate shikimate: asparagine 89 and aspartate 105. NADP(+) contacts are provided by residues 129–133, 152–157, and methionine 216; these read GAGGA and NRTFFK. Tyrosine 218 lines the shikimate pocket. An NADP(+)-binding site is contributed by glycine 240.

The protein belongs to the shikimate dehydrogenase family. Homodimer.

It carries out the reaction shikimate + NADP(+) = 3-dehydroshikimate + NADPH + H(+). It functions in the pathway metabolic intermediate biosynthesis; chorismate biosynthesis; chorismate from D-erythrose 4-phosphate and phosphoenolpyruvate: step 4/7. Involved in the biosynthesis of the chorismate, which leads to the biosynthesis of aromatic amino acids. Catalyzes the reversible NADPH linked reduction of 3-dehydroshikimate (DHSA) to yield shikimate (SA). The chain is Shikimate dehydrogenase (NADP(+)) from Pectobacterium atrosepticum (strain SCRI 1043 / ATCC BAA-672) (Erwinia carotovora subsp. atroseptica).